Consider the following 296-residue polypeptide: MKLKREYDELIKADAVKEIAKELGSRPLEVALPEKYIARHEEKFNMACEHILEKDPSLFPILKNNEFTLYLKETQVPNTLEDYFIRLASTILSQQISGQAAESIKARVVSLYGGAFPDYKILFEDFKDPAKCAEIAKCGLSKRKMIYLESLAVYFTEKYKDIEKLFGQKDNDEEVIESLVTNVKGIGPWSAKMFLISGLKRMDVFAPEDLGIARGFSKYLSDKPELEKELMRERKVVKKSKIKHKKYNWKIYDDDIMEKCSETFSPYRSVFMFILWRLASTNTDAMMKAEENFVKS.

At Ser-110 the chain carries Phosphoserine. Asp-209 functions as the Proton acceptor in the catalytic mechanism.

Belongs to the alkylbase DNA glycosidase AlkA family.

It localises to the nucleus. The catalysed reaction is Hydrolysis of alkylated DNA, releasing 3-methyladenine, 3-methylguanine, 7-methylguanine and 7-methyladenine.. Functionally, hydrolysis of the deoxyribose N-glycosidic bond to excise 3-methyladenine or 7-methyladenine from the damaged DNA polymer formed by alkylation lesions. This chain is DNA-3-methyladenine glycosylase (MAG1), found in Saccharomyces cerevisiae (strain ATCC 204508 / S288c) (Baker's yeast).